The chain runs to 400 residues: tRNA-specific adenosine deaminase 1 (400 aa).

One can recognise an A to I editase domain in the interval 76–400; it reads SIATGVKALP…WIPTRTDDVK (325 aa). Residue His101 participates in Zn(2+) binding. Glu103 acts as the Proton donor in catalysis. Arg108 is a binding site for 1D-myo-inositol hexakisphosphate. Cys157 and Cys223 together coordinate Zn(2+). The 1D-myo-inositol hexakisphosphate site is built by Lys226, Arg232, Lys369, and Arg375.

Belongs to the ADAT1 family. The cofactor is 1D-myo-inositol hexakisphosphate. Requires Zn(2+) as cofactor.

The enzyme catalyses adenosine(37) in tRNA(Ala) + H2O + H(+) = inosine(37) in tRNA(Ala) + NH4(+). Functionally, deaminates adenosine-37 to inosine in tRNA-Ala. This chain is tRNA-specific adenosine deaminase 1 (TAD1), found in Saccharomyces cerevisiae (strain ATCC 204508 / S288c) (Baker's yeast).